Here is a 358-residue protein sequence, read N- to C-terminus: Neuronal-specific septin-3 (358 aa).

Residues M1–T10 show a composition bias toward basic and acidic residues. The tract at residues M1–M29 is disordered. A Septin-type G domain is found at T58–D331. Positions G68–S75 are G1 motif. Residue G68–S75 participates in GTP binding. Phosphoserine is present on S91. GTP is bound at residue T102. The G3 motif stretch occupies residues D125 to G128. The tract at residues A207–D210 is G4 motif. GTP-binding positions include K208–E216, G265, and R280.

Belongs to the TRAFAC class TrmE-Era-EngA-EngB-Septin-like GTPase superfamily. Septin GTPase family. As to quaternary structure, septins polymerize into heterooligomeric protein complexes that form filaments, and can associate with cellular membranes, actin filaments and microtubules. GTPase activity is required for filament formation. Phosphorylated by PKG on serine residues. Phosphorylated by PKG on Ser-91. Brain-specific, with highest expression in the hippocampal CA3 region (at protein level).

Its subcellular location is the cytoplasm. The protein localises to the cytoskeleton. It is found in the synapse. Functionally, filament-forming cytoskeletal GTPase. May play a role in cytokinesis (Potential). This chain is Neuronal-specific septin-3, found in Rattus norvegicus (Rat).